The following is a 174-amino-acid chain: UPF0398 protein LACR_0544 (174 aa).

This sequence belongs to the UPF0398 family.

This chain is UPF0398 protein LACR_0544, found in Lactococcus lactis subsp. cremoris (strain SK11).